A 504-amino-acid polypeptide reads, in one-letter code: Maturase K (504 aa).

This sequence belongs to the intron maturase 2 family. MatK subfamily.

The protein localises to the plastid. Its subcellular location is the chloroplast. Functionally, usually encoded in the trnK tRNA gene intron. Probably assists in splicing its own and other chloroplast group II introns. The protein is Maturase K of Rorippa amphibia (Great yellow-cress).